The sequence spans 183 residues: Dual-action ribosomal maturation protein DarP (183 aa).

The protein belongs to the DarP family.

It is found in the cytoplasm. Member of a network of 50S ribosomal subunit biogenesis factors which assembles along the 30S-50S interface, preventing incorrect 23S rRNA structures from forming. Promotes peptidyl transferase center (PTC) maturation. This is Dual-action ribosomal maturation protein DarP from Salmonella gallinarum (strain 287/91 / NCTC 13346).